The sequence spans 279 residues: Movement protein (279 aa).

The disordered stretch occupies residues 246-279 (SESEELNVESPPAAIGSSSASRSEAFRPQVVNGL). Residues 254-268 (ESPPAAIGSSSASRS) show a composition bias toward low complexity.

It belongs to the cucumovirus movement protein family.

It localises to the host cell junction. Its subcellular location is the host plasmodesma. Functionally, transports viral genome to neighboring plant cells directly through plasmosdesmata, without any budding. The movement protein allows efficient cell to cell propagation, by bypassing the host cell wall barrier. Acts by forming a tubular structure at the host plasmodesmata, enlarging it enough to allow free passage of virion capsids. In Cucumber mosaic virus (strain CS) (CMV), this protein is Movement protein.